A 66-amino-acid polypeptide reads, in one-letter code: Large ribosomal subunit protein bL32 (66 aa).

Residues Met1–Arg18 show a composition bias toward basic residues. The tract at residues Met1–Asp21 is disordered.

This sequence belongs to the bacterial ribosomal protein bL32 family.

The sequence is that of Large ribosomal subunit protein bL32 from Mycoplasmopsis agalactiae (strain NCTC 10123 / CIP 59.7 / PG2) (Mycoplasma agalactiae).